Here is a 504-residue protein sequence, read N- to C-terminus: L-carnitine/gamma-butyrobetaine antiporter (504 aa).

The next 12 membrane-spanning stretches (helical) occupy residues 10–30 (IEPK…WLTV), 51–71 (WGWA…WLVF), 92–112 (IFMM…SIEI), 143–163 (GPLP…FFFV), 195–215 (FYLV…TPLV), 231–251 (LDAI…ACGL), 263–283 (SYLS…SFIM), 316–336 (WTVF…IFLA), 347–367 (LCFG…TVLG), 398–418 (WAAL…CFIA), 446–466 (LLVR…LLAL), and 475–495 (AIIA…LSFI).

The protein belongs to the BCCT transporter (TC 2.A.15) family. CaiT subfamily. Homotrimer.

The protein localises to the cell inner membrane. The enzyme catalyses 4-(trimethylamino)butanoate(in) + (R)-carnitine(out) = 4-(trimethylamino)butanoate(out) + (R)-carnitine(in). Its pathway is amine and polyamine metabolism; carnitine metabolism. Its function is as follows. Catalyzes the exchange of L-carnitine for gamma-butyrobetaine. This is L-carnitine/gamma-butyrobetaine antiporter from Escherichia coli O6:K15:H31 (strain 536 / UPEC).